The chain runs to 307 residues: Pseudouridine-5'-phosphate glycosidase (307 aa).

Glutamate 28 (proton donor) is an active-site residue. Residues lysine 89 and valine 109 each coordinate substrate. Mn(2+) is bound at residue aspartate 141. 143-145 is a substrate binding site; the sequence is SAD. The active-site Nucleophile is lysine 162.

This sequence belongs to the pseudouridine-5'-phosphate glycosidase family. As to quaternary structure, homotrimer. Mn(2+) is required as a cofactor.

It catalyses the reaction D-ribose 5-phosphate + uracil = psi-UMP + H2O. Catalyzes the reversible cleavage of pseudouridine 5'-phosphate (PsiMP) to ribose 5-phosphate and uracil. Functions biologically in the cleavage direction, as part of a pseudouridine degradation pathway. This is Pseudouridine-5'-phosphate glycosidase from Nocardioides sp. (strain ATCC BAA-499 / JS614).